A 504-amino-acid polypeptide reads, in one-letter code: Histidine ammonia-lyase (504 aa).

Positions 141–143 form a cross-link, 5-imidazolinone (Ala-Gly); the sequence is ASG. 2,3-didehydroalanine (Ser) is present on Ser-142.

This sequence belongs to the PAL/histidase family. Post-translationally, contains an active site 4-methylidene-imidazol-5-one (MIO), which is formed autocatalytically by cyclization and dehydration of residues Ala-Ser-Gly.

The protein resides in the cytoplasm. It carries out the reaction L-histidine = trans-urocanate + NH4(+). The protein operates within amino-acid degradation; L-histidine degradation into L-glutamate; N-formimidoyl-L-glutamate from L-histidine: step 1/3. The polypeptide is Histidine ammonia-lyase (Geobacillus kaustophilus (strain HTA426)).